Here is a 408-residue protein sequence, read N- to C-terminus: Imidazolonepropionase (408 aa).

Fe(3+) is bound by residues His74 and His76. Positions 74 and 76 each coordinate Zn(2+). 4-imidazolone-5-propanoate contacts are provided by Arg83, Tyr146, and His179. Tyr146 is a binding site for N-formimidoyl-L-glutamate. His244 contributes to the Fe(3+) binding site. His244 provides a ligand contact to Zn(2+). Gln247 contributes to the 4-imidazolone-5-propanoate binding site. Asp319 provides a ligand contact to Fe(3+). Residue Asp319 coordinates Zn(2+). 2 residues coordinate N-formimidoyl-L-glutamate: Asn321 and Gly323. Thr324 contacts 4-imidazolone-5-propanoate.

This sequence belongs to the metallo-dependent hydrolases superfamily. HutI family. Requires Zn(2+) as cofactor. Fe(3+) serves as cofactor.

Its subcellular location is the cytoplasm. It catalyses the reaction 4-imidazolone-5-propanoate + H2O = N-formimidoyl-L-glutamate. It functions in the pathway amino-acid degradation; L-histidine degradation into L-glutamate; N-formimidoyl-L-glutamate from L-histidine: step 3/3. Functionally, catalyzes the hydrolytic cleavage of the carbon-nitrogen bond in imidazolone-5-propanoate to yield N-formimidoyl-L-glutamate. It is the third step in the universal histidine degradation pathway. The sequence is that of Imidazolonepropionase from Ralstonia nicotianae (strain ATCC BAA-1114 / GMI1000) (Ralstonia solanacearum).